We begin with the raw amino-acid sequence, 89 residues long: Small ribosomal subunit protein uS15 (89 aa).

It belongs to the universal ribosomal protein uS15 family. Part of the 30S ribosomal subunit. Forms a bridge to the 50S subunit in the 70S ribosome, contacting the 23S rRNA.

Its function is as follows. One of the primary rRNA binding proteins, it binds directly to 16S rRNA where it helps nucleate assembly of the platform of the 30S subunit by binding and bridging several RNA helices of the 16S rRNA. In terms of biological role, forms an intersubunit bridge (bridge B4) with the 23S rRNA of the 50S subunit in the ribosome. This chain is Small ribosomal subunit protein uS15, found in Ruegeria sp. (strain TM1040) (Silicibacter sp.).